A 487-amino-acid chain; its full sequence is Transcription factor GTE5, chloroplastic (487 aa).

A chloroplast-targeting transit peptide spans 1 to 32 (MSSEHISGGGASKTKKHKWSSSQNRPKPMGVS). 3 disordered regions span residues 1-48 (MSSE…NSFA), 93-127 (ANPG…GADK), and 400-487 (KNEA…DNGN). The Bromo domain maps to 127-233 (KGTVQIFKNC…NMFEDKWVSI (107 aa)). One can recognise an NET domain in the interval 320 to 401 (EEEAPVNNRD…GYKESLSKKN (82 aa)). Over residues 400–414 (KNEAHGFGSERDAES) the composition is skewed to basic and acidic residues. Residues 415–435 (VHNSIQEPTTLVSGTTTSRVT) show a composition bias toward polar residues. Residues 451-487 (NNASGSSSSNSSSSDSGSCSSDTDSDSSSGRGSDNGN) show a composition bias toward low complexity.

In terms of assembly, interacts with SIZ1 (via PHD domain). Sumoylated by SIZ1.

It is found in the plastid. The protein localises to the chloroplast. This is Transcription factor GTE5, chloroplastic (GTE5) from Arabidopsis thaliana (Mouse-ear cress).